A 329-amino-acid chain; its full sequence is GTP 3',8-cyclase (329 aa).

One can recognise a Radical SAM core domain in the interval 8 to 234; the sequence is AFARKYYYLR…QLRQRSDGPA (227 aa). R17 is a binding site for GTP. Positions 24 and 28 each coordinate [4Fe-4S] cluster. Y30 is a binding site for S-adenosyl-L-methionine. C31 contacts [4Fe-4S] cluster. R68 contributes to the GTP binding site. Position 72 (G72) interacts with S-adenosyl-L-methionine. T99 lines the GTP pocket. S123 lines the S-adenosyl-L-methionine pocket. K160 provides a ligand contact to GTP. M194 provides a ligand contact to S-adenosyl-L-methionine. Residues C257 and C260 each coordinate [4Fe-4S] cluster. 262–264 contributes to the GTP binding site; it reads RLR. C274 lines the [4Fe-4S] cluster pocket.

The protein belongs to the radical SAM superfamily. MoaA family. Monomer and homodimer. The cofactor is [4Fe-4S] cluster.

The catalysed reaction is GTP + AH2 + S-adenosyl-L-methionine = (8S)-3',8-cyclo-7,8-dihydroguanosine 5'-triphosphate + 5'-deoxyadenosine + L-methionine + A + H(+). It participates in cofactor biosynthesis; molybdopterin biosynthesis. Its function is as follows. Catalyzes the cyclization of GTP to (8S)-3',8-cyclo-7,8-dihydroguanosine 5'-triphosphate. This chain is GTP 3',8-cyclase, found in Escherichia coli O17:K52:H18 (strain UMN026 / ExPEC).